The sequence spans 454 residues: tRNA modification GTPase MnmE (454 aa).

Arginine 23, glutamate 80, and lysine 120 together coordinate (6S)-5-formyl-5,6,7,8-tetrahydrofolate. One can recognise a TrmE-type G domain in the interval 216–377; it reads GMKVVIAGRP…LRNHLKQSMG (162 aa). Asparagine 226 serves as a coordination point for K(+). GTP contacts are provided by residues 226-231, 245-251, 270-273, 335-338, and 358-360; these read NAGKSS, TDIAGTT, DTAG, NKAD, and SAR. Serine 230 is a binding site for Mg(2+). Threonine 245, isoleucine 247, and threonine 250 together coordinate K(+). Threonine 251 is a binding site for Mg(2+). (6S)-5-formyl-5,6,7,8-tetrahydrofolate is bound at residue lysine 454.

The protein belongs to the TRAFAC class TrmE-Era-EngA-EngB-Septin-like GTPase superfamily. TrmE GTPase family. In terms of assembly, homodimer. Heterotetramer of two MnmE and two MnmG subunits. The cofactor is K(+).

Its subcellular location is the cytoplasm. Exhibits a very high intrinsic GTPase hydrolysis rate. Involved in the addition of a carboxymethylaminomethyl (cmnm) group at the wobble position (U34) of certain tRNAs, forming tRNA-cmnm(5)s(2)U34. The polypeptide is tRNA modification GTPase MnmE (Shigella sonnei (strain Ss046)).